Here is a 153-residue protein sequence, read N- to C-terminus: Large ribosomal subunit protein uL15 (153 aa).

It belongs to the universal ribosomal protein uL15 family. In terms of assembly, part of the 50S ribosomal subunit.

Its function is as follows. Binds to the 23S rRNA. The sequence is that of Large ribosomal subunit protein uL15 from Pelagibacter ubique (strain HTCC1062).